The following is a 100-amino-acid chain: Coiled-coil domain-containing protein 167 (100 aa).

A coiled-coil region spans residues 14 to 81 (VASEIDRVEE…VLRGENRRNM (68 aa)). The helical transmembrane segment at 82 to 99 (MLSVALLAISALFYYTFI) threads the bilayer.

Its subcellular location is the membrane. The sequence is that of Coiled-coil domain-containing protein 167 (ccdc167) from Danio rerio (Zebrafish).